A 359-amino-acid chain; its full sequence is Serine hydrolase-like protein DDB_G0286239 (359 aa).

One can recognise an AB hydrolase-1 domain in the interval 38–289 (LALHGWLDNA…VPGSHHFHME (252 aa)). Ser111 is a catalytic residue. A disordered region spans residues 310–359 (FTPSSTTQQQQQQQQSAENKKGDNHNQIAEQDLSTSNTSSPIISKPKPNL). The segment covering 334-351 (HNQIAEQDLSTSNTSSPI) has biased composition (polar residues).

This sequence belongs to the AB hydrolase superfamily.

In terms of biological role, probable serine hydrolase. The polypeptide is Serine hydrolase-like protein DDB_G0286239 (Dictyostelium discoideum (Social amoeba)).